The following is a 1000-amino-acid chain: C-module-binding factor A (1000 aa).

The JmjC domain maps to 113–280 (PREWQEYLSH…ISYFSSLPHT (168 aa)). A PHD-type; atypical zinc finger spans residues 489 to 544 (KIKCHRCEKRFKKFSIIFCTNCNARFCEQCVVNTFGQNFQVLMKRNEWECFCCKGL). The RING-type; degenerate zinc finger occupies 492–542 (CHRCEKRFKKFSIIFCTNCNARFCEQCVVNTFGQNFQVLMKRNEWECFCCK). 2 disordered regions span residues 561–647 (RILN…SSYS) and 660–818 (SYGS…KNLK). Low complexity-rich tracts occupy residues 574–647 (NNNN…SSYS), 660–683 (SYGSYDNYNNNNNNNNYNNNNNNN), 700–710 (SSSSGSGSSNS), 732–751 (NNNNNNNHHNNNNNNNNNHH), and 760–789 (NNNNNNNNNNPTTSSLSSLSTSLSSSSTST). Basic and acidic residues predominate over residues 805 to 818 (DNDKPKGRPPKNLK). Positions 810-818 (KGRPPKNLK) form a DNA-binding region, a.T hook.

In terms of assembly, monomer.

The protein resides in the nucleus. Its function is as follows. Transcriptional regulator involved in phagocytosis and pinocytosis. Both activates and represses transcription. Regulates expression of acaA, carA, pkaC, csaA, cotB and lagC. Promotes amplification of the tRNA gene-associated retrotransposon TRE5-A, a mobile genetic element formerly called as Dictyostelium repetitive element (DRE). Suppresses agnC and agnE encoding argonaute proteins which are part of a RNA interference pathway controlling TRE5-A amplification. Required for amplification of both sense and antisense RNA transcripts, but does not activate their promoters found in A-module and C-module of the TRE5-A, respectively. Nevertheless, binds to distinct DNA sequences containing A and T stretches within the C-module in vitro. This chain is C-module-binding factor A, found in Dictyostelium discoideum (Social amoeba).